The primary structure comprises 186 residues: DNA-directed RNA polymerase 22 kDa subunit (186 aa).

The protein belongs to the poxviridae DNA-directed RNA polymerase 22 kDa subunit family. The DNA-dependent RNA polymerase used for intermediate and late genes expression consists of eight subunits Rpo30/OPG66, Rpo7/OPG90, Rpo22/OPG103, Rpo147/OPG105, Rpo18/OPG119, Rpo19/OPG131, Rpo132/OPG151 and Rpo35/OPG156. The same holoenzyme, with the addition of the transcription-specificity factor OPG109, is used for early gene expression.

The protein resides in the virion. It carries out the reaction RNA(n) + a ribonucleoside 5'-triphosphate = RNA(n+1) + diphosphate. In terms of biological role, part of the DNA-dependent RNA polymerase which catalyzes the transcription of viral DNA into RNA using the four ribonucleoside triphosphates as substrates. Responsible for the transcription of early, intermediate and late genes. DNA-dependent RNA polymerase associates with the early transcription factor (ETF), itself composed of OPG118 and OPG133, thereby allowing the early genes transcription. Late transcription, and probably also intermediate transcription, require newly synthesized RNA polymerase. This chain is DNA-directed RNA polymerase 22 kDa subunit (OPG103), found in Vertebrata (FPV).